A 586-amino-acid chain; its full sequence is Protein BONZAI 2 (586 aa).

G2 is lipidated: N-myristoyl glycine. C2 domains lie at 25–164 (SAAT…ALEL) and 176–303 (PQHN…NLAL). The Ca(2+) site is built by D62, D68, D121, and D123. The region spanning 344–563 (NFMVAIDFTA…SVVEALLAEL (220 aa)) is the VWFA domain.

The protein belongs to the copine family. Interacts with BAP1 and BAP2. It depends on Ca(2+) as a cofactor. Expressed in roots, leaves and stems. Expressed in young growing tissues.

It localises to the cell membrane. Negative regulator of cell death and defense responses. May repress a number of R genes and may have effects in promoting growth and development. May function in membrane trafficking and in fusion of vesicles with plasma membrane. This is Protein BONZAI 2 (BON2) from Arabidopsis thaliana (Mouse-ear cress).